The primary structure comprises 216 residues: 4-hydroxy-tetrahydrodipicolinate reductase (216 aa).

Residues 9–12 (SGRM), 71–73 (GTT), and 95–98 (AYNF) contribute to the NAD(+) site. His127 functions as the Proton donor/acceptor in the catalytic mechanism. (S)-2,3,4,5-tetrahydrodipicolinate is bound at residue His128. Lys131 is a binding site for NAD(+). Catalysis depends on Lys131, which acts as the Proton donor. Residue 137-138 (GT) coordinates (S)-2,3,4,5-tetrahydrodipicolinate.

It belongs to the DapB family. In terms of assembly, homotetramer.

It localises to the cytoplasm. It carries out the reaction (S)-2,3,4,5-tetrahydrodipicolinate + NAD(+) + H2O = (2S,4S)-4-hydroxy-2,3,4,5-tetrahydrodipicolinate + NADH + H(+). The catalysed reaction is (S)-2,3,4,5-tetrahydrodipicolinate + NADP(+) + H2O = (2S,4S)-4-hydroxy-2,3,4,5-tetrahydrodipicolinate + NADPH + H(+). Its pathway is amino-acid biosynthesis; L-lysine biosynthesis via DAP pathway; (S)-tetrahydrodipicolinate from L-aspartate: step 4/4. With respect to regulation, is inhibited by high concentrations of NADH. Catalyzes the conversion of 4-hydroxy-tetrahydrodipicolinate (HTPA) to tetrahydrodipicolinate. Uses NADPH as a reductant with much more efficiency than NADH. This Thermotoga maritima (strain ATCC 43589 / DSM 3109 / JCM 10099 / NBRC 100826 / MSB8) protein is 4-hydroxy-tetrahydrodipicolinate reductase.